A 178-amino-acid chain; its full sequence is Putative pre-16S rRNA nuclease (178 aa).

The segment covering 1–18 (MDHAEQGPDRPGVDDPGR) has biased composition (basic and acidic residues). Residues 1 to 21 (MDHAEQGPDRPGVDDPGRGRR) are disordered.

Belongs to the YqgF nuclease family.

Its subcellular location is the cytoplasm. Functionally, could be a nuclease involved in processing of the 5'-end of pre-16S rRNA. This is Putative pre-16S rRNA nuclease from Rhodococcus jostii (strain RHA1).